The sequence spans 518 residues: Bifunctional methyltransferase (518 aa).

Residues 1-300 (MQYSIKQILS…SHNRVIEISP (300 aa)) are hemK. The interval 1 to 302 (MQYSIKQILS…NRVIEISPIN (302 aa)) is RF MTase. S-adenosyl-L-methionine contacts are provided by residues 140–144 (GTGSG), Asp163, Trp192, Asn207, Glu347, Glu372, Asn399, and Asp421. Residue 207 to 210 (NPPY) participates in substrate binding. Positions 301–518 (INLNRSYARR…MILQHALTDH (218 aa)) are tRNA (guanine-N(7)-)-methyltransferase. The interval 305 to 518 (RSYARRIGKS…MILQHALTDH (214 aa)) is tRNA MTase. The active site involves Asp421. The substrate site is built by Lys425 and Asp457.

It in the C-terminal section; belongs to the class I-like SAM-binding methyltransferase superfamily. TrmB family. In the N-terminal section; belongs to the protein N5-glutamine methyltransferase family. PrmC subfamily.

The catalysed reaction is L-glutaminyl-[peptide chain release factor] + S-adenosyl-L-methionine = N(5)-methyl-L-glutaminyl-[peptide chain release factor] + S-adenosyl-L-homocysteine + H(+). It catalyses the reaction guanosine(46) in tRNA + S-adenosyl-L-methionine = N(7)-methylguanosine(46) in tRNA + S-adenosyl-L-homocysteine. Its function is as follows. Methylates the class 1 translation termination release factors RF1/PrfA and RF2/PrfB on the glutamine residue of the universally conserved GGQ motif. In terms of biological role, catalyzes the formation of N(7)-methylguanine at position 46 (m7G46) in tRNA. This Rickettsia prowazekii (strain Madrid E) protein is Bifunctional methyltransferase (prmC/trmB).